Here is a 248-residue protein sequence, read N- to C-terminus: DNA polymerase sliding clamp (248 aa).

The protein belongs to the PCNA family. As to quaternary structure, homotrimer. The subunits circularize to form a toroid; DNA passes through its center. Replication factor C (RFC) is required to load the toroid on the DNA.

In terms of biological role, sliding clamp subunit that acts as a moving platform for DNA processing. Responsible for tethering the catalytic subunit of DNA polymerase and other proteins to DNA during high-speed replication. This chain is DNA polymerase sliding clamp, found in Nitrosopumilus maritimus (strain SCM1).